The primary structure comprises 99 residues: Large ribosomal subunit protein uL23 (99 aa).

This sequence belongs to the universal ribosomal protein uL23 family. Part of the 50S ribosomal subunit. Contacts protein L29, and trigger factor when it is bound to the ribosome.

In terms of biological role, one of the early assembly proteins it binds 23S rRNA. One of the proteins that surrounds the polypeptide exit tunnel on the outside of the ribosome. Forms the main docking site for trigger factor binding to the ribosome. This Francisella philomiragia subsp. philomiragia (strain ATCC 25017 / CCUG 19701 / FSC 153 / O#319-036) protein is Large ribosomal subunit protein uL23.